The sequence spans 959 residues: Translation initiation factor IF-2 (959 aa).

Basic and acidic residues predominate over residues M1–T10. The interval M1–I374 is disordered. Residues E27–H37 are compositionally biased toward polar residues. Composition is skewed to low complexity over residues A63–P118 and Q128–P138. Composition is skewed to basic and acidic residues over residues S154–K225 and A232–R241. The span at G246–A284 shows a compositional bias: low complexity. Residues P318–R333 show a composition bias toward basic and acidic residues. The 170-residue stretch at S457 to K626 folds into the tr-type G domain. Residues G466–T473 form a G1 region. Residue G466–T473 participates in GTP binding. The interval G491 to H495 is G2. Residues D512–G515 form a G3 region. Residues D512–H516 and N566–D569 each bind GTP. Residues N566 to D569 form a G4 region. The G5 stretch occupies residues S602–K604.

Belongs to the TRAFAC class translation factor GTPase superfamily. Classic translation factor GTPase family. IF-2 subfamily.

The protein resides in the cytoplasm. Its function is as follows. One of the essential components for the initiation of protein synthesis. Protects formylmethionyl-tRNA from spontaneous hydrolysis and promotes its binding to the 30S ribosomal subunits. Also involved in the hydrolysis of GTP during the formation of the 70S ribosomal complex. The protein is Translation initiation factor IF-2 of Brucella suis biovar 1 (strain 1330).